Here is a 241-residue protein sequence, read N- to C-terminus: 3-deoxy-D-manno-octulosonic acid kinase (241 aa).

D171 is an active-site residue.

Belongs to the protein kinase superfamily. KdkA/RfaP family.

It is found in the cell inner membrane. It catalyses the reaction an alpha-Kdo-(2-&gt;6)-lipid IVA + ATP = a 4-O-phospho-alpha-Kdo-(2-&gt;6)-lipid IVA + ADP + H(+). It functions in the pathway bacterial outer membrane biogenesis; LPS core biosynthesis. Its function is as follows. Catalyzes the ATP-dependent phosphorylation of the 3-deoxy-D-manno-octulosonic acid (Kdo) residue in Kdo-lipid IV(A) at the 4-OH position. The sequence is that of 3-deoxy-D-manno-octulosonic acid kinase from Haemophilus influenzae (strain 86-028NP).